The primary structure comprises 447 residues: Putative branched-chain amino acid carrier protein SSP1343 (447 aa).

12 helical membrane passes run 6-26 (WIIG…IFPP), 40-60 (ILAF…VGAL), 74-94 (PKFS…LFAI), 116-136 (LALF…CINP), 143-163 (IGSL…VKGF), 192-212 (GYLT…VNAV), 228-248 (LMAG…LGYI), 289-309 (LLGI…VVAV), 324-344 (IYVI…LNSV), 349-369 (VPVL…ILLA), 381-401 (IPVA…QGWI), and 416-436 (LEWF…AAMV).

It belongs to the branched chain amino acid transporter family.

Its subcellular location is the cell membrane. Its function is as follows. Component of the transport system for branched-chain amino acids (leucine, isoleucine and valine), which is coupled to a proton motive force. This chain is Putative branched-chain amino acid carrier protein SSP1343, found in Staphylococcus saprophyticus subsp. saprophyticus (strain ATCC 15305 / DSM 20229 / NCIMB 8711 / NCTC 7292 / S-41).